The following is a 150-amino-acid chain: Deoxyuridine 5'-triphosphate nucleotidohydrolase (150 aa).

Residues 69 to 71 (RSG), asparagine 82, 86 to 88 (LID), and lysine 96 each bind substrate.

This sequence belongs to the dUTPase family. The cofactor is Mg(2+).

It carries out the reaction dUTP + H2O = dUMP + diphosphate + H(+). Its pathway is pyrimidine metabolism; dUMP biosynthesis; dUMP from dCTP (dUTP route): step 2/2. Functionally, this enzyme is involved in nucleotide metabolism: it produces dUMP, the immediate precursor of thymidine nucleotides and it decreases the intracellular concentration of dUTP so that uracil cannot be incorporated into DNA. This is Deoxyuridine 5'-triphosphate nucleotidohydrolase from Neisseria meningitidis serogroup A / serotype 4A (strain DSM 15465 / Z2491).